The primary structure comprises 359 residues: Palmitoyltransferase PFA5 (359 aa).

Helical transmembrane passes span 10–30 (WWYS…AIAY), 47–67 (AAAI…WIIW), 164–184 (LFNQ…VSVV), and 206–226 (LVVL…FISF). Residues 120 to 170 (VWCSVCQSLKGLRTHHSVHLGFCVPRLDHYCVWLGTVIGRRNYRLFNQFLM) enclose the DHHC domain.

Belongs to the DHHC palmitoyltransferase family. PFA5 subfamily. Post-translationally, autopalmitoylated.

The protein localises to the membrane. The catalysed reaction is L-cysteinyl-[protein] + hexadecanoyl-CoA = S-hexadecanoyl-L-cysteinyl-[protein] + CoA. The polypeptide is Palmitoyltransferase PFA5 (PFA5) (Eremothecium gossypii (strain ATCC 10895 / CBS 109.51 / FGSC 9923 / NRRL Y-1056) (Yeast)).